Consider the following 162-residue polypeptide: D-aminoacyl-tRNA deacylase (162 aa).

The Gly-cisPro motif, important for rejection of L-amino acids signature appears at 143–144 (GP).

The protein belongs to the DTD family. As to quaternary structure, homodimer.

The protein resides in the cytoplasm. It carries out the reaction glycyl-tRNA(Ala) + H2O = tRNA(Ala) + glycine + H(+). It catalyses the reaction a D-aminoacyl-tRNA + H2O = a tRNA + a D-alpha-amino acid + H(+). Functionally, an aminoacyl-tRNA editing enzyme that deacylates mischarged D-aminoacyl-tRNAs. Also deacylates mischarged glycyl-tRNA(Ala), protecting cells against glycine mischarging by AlaRS. Acts via tRNA-based rather than protein-based catalysis; rejects L-amino acids rather than detecting D-amino acids in the active site. By recycling D-aminoacyl-tRNA to D-amino acids and free tRNA molecules, this enzyme counteracts the toxicity associated with the formation of D-aminoacyl-tRNA entities in vivo and helps enforce protein L-homochirality. This Nitratidesulfovibrio vulgaris (strain ATCC 29579 / DSM 644 / CCUG 34227 / NCIMB 8303 / VKM B-1760 / Hildenborough) (Desulfovibrio vulgaris) protein is D-aminoacyl-tRNA deacylase.